The following is a 141-amino-acid chain: Putative antiporter subunit mnhB2 (141 aa).

The next 4 helical transmembrane spans lie at 10–30 (TVTK…FFAG), 35–55 (GGGF…FLAF), 70–90 (ILMI…TFFG), and 114–134 (ITLF…TVML).

The protein belongs to the CPA3 antiporters (TC 2.A.63) subunit B family. In terms of assembly, may form a heterooligomeric complex that consists of seven subunits: mnhA2, mnhB2, mnhC2, mnhD2, mnhE2, mnhF2 and mnhG2.

It localises to the cell membrane. This Staphylococcus aureus (strain MRSA252) protein is Putative antiporter subunit mnhB2 (mnhB2).